Reading from the N-terminus, the 90-residue chain is ATP synthase subunit e, mitochondrial (90 aa).

Ser2 bears the N-acetylserine mark. The chain crosses the membrane as a helical span at residues 7 to 23; that stretch reads VLRWSALGAGVVYGFVH.

In terms of assembly, F-type ATP synthases have 2 components, the catalytic core F(1) and the membrane-embedded component F(0), linked together by a central stalk and a peripheral stalk. The central stalk, also called rotor shaft, is often seen as part of F(1). The peripheral stalk is seen as part of F(0). F(0) contains the membrane channel next to the rotor. F-type ATP synthases form dimers but each monomer functions independently in ATP generation. The dimer consists of 17 different polypeptides: ATP1 (subunit alpha, 3 molecules per monomer, part of F(1)), ATP2 (subunit beta, 3 copies per monomer, part of F(1)), ATP3 (subunit gamma, part of the central stalk), ATP4 (subunit b, part of the peripheral stalk), ATP5/OSCP (subunit 5/OSCP, part of the peripheral stalk), ATP6 (subunit a, part of the peripheral stalk), ATP7 (subunit d, part of the peripheral stalk), ATP8 (subunit 8, part of the peripheral stalk), OLI1 (subunit c, part of the rotor, 10 molecules per monomer), ATP14 (subunit h, part of the peripheral stalk), ATP15 (subunit epsilon, part of the central stalk), ATP16 (subunit delta, part of the central stalk), ATP17 (subunit f, part of the peripheral stalk), ATP18 (subunit i/j, part of the peripheral stalk), ATP19 (subunit k, dimer-specific, at interface between monomers), ATP20 (subunit g, at interface between monomers), TIM11 (subunit e, at interface between monomers).

Its subcellular location is the mitochondrion inner membrane. In terms of biological role, mitochondrial membrane ATP synthase (F(1)F(0) ATP synthase or Complex V) produces ATP from ADP in the presence of a proton gradient across the membrane which is generated by electron transport complexes of the respiratory chain. F-type ATP synthases consist of two structural domains, F(1) - containing the extramembraneous catalytic core, and F(0) - containing the membrane proton channel, linked together by a central stalk and a peripheral stalk. During catalysis, ATP synthesis in the catalytic domain of F(1) is coupled via a rotary mechanism of the central stalk subunits to proton translocation. Part of the complex F(0) domain. Minor subunit located with subunit a/ATP6 in the membrane. Together with subunit g/ATP20, probably contributes to membrane curvature at the site of the ATP synthase dimer, ultimately contributing to formation of cristae. The polypeptide is ATP synthase subunit e, mitochondrial (Yarrowia lipolytica (strain CLIB 122 / E 150) (Yeast)).